Reading from the N-terminus, the 161-residue chain is Cytochrome b6-f complex subunit 4 (161 aa).

Transmembrane regions (helical) follow at residues 37-57 (LLYI…GLAV), 96-116 (LLGV…PFIE), and 132-152 (TVFL…TFPI).

Belongs to the cytochrome b family. PetD subfamily. In terms of assembly, the 4 large subunits of the cytochrome b6-f complex are cytochrome b6, subunit IV (17 kDa polypeptide, PetD), cytochrome f and the Rieske protein, while the 4 small subunits are PetG, PetL, PetM and PetN. The complex functions as a dimer.

Its subcellular location is the cellular thylakoid membrane. Component of the cytochrome b6-f complex, which mediates electron transfer between photosystem II (PSII) and photosystem I (PSI), cyclic electron flow around PSI, and state transitions. The polypeptide is Cytochrome b6-f complex subunit 4 (Cyanothece sp. (strain PCC 7425 / ATCC 29141)).